The chain runs to 235 residues: Glycerol-3-phosphate acyltransferase (235 aa).

Helical transmembrane passes span 4 to 24 (LIVILAVSYLIGSIPTSIIAG), 56 to 76 (AVTLLDIVKGAVAAISVVVFF), 90 to 110 (VALRLIAGLAAVFGHVFTVFA), 126 to 146 (FGIAPVSTLIVLAVFLLTIFV), 152 to 172 (VASIIAAIAFPLVILVRKYLF), and 191 to 211 (IHDSLDFHLLIFGMIVAFAII).

This sequence belongs to the PlsY family. In terms of assembly, probably interacts with PlsX.

It is found in the cell inner membrane. The catalysed reaction is an acyl phosphate + sn-glycerol 3-phosphate = a 1-acyl-sn-glycero-3-phosphate + phosphate. Its pathway is lipid metabolism; phospholipid metabolism. Functionally, catalyzes the transfer of an acyl group from acyl-phosphate (acyl-PO(4)) to glycerol-3-phosphate (G3P) to form lysophosphatidic acid (LPA). This enzyme utilizes acyl-phosphate as fatty acyl donor, but not acyl-CoA or acyl-ACP. The chain is Glycerol-3-phosphate acyltransferase from Prosthecochloris aestuarii (strain DSM 271 / SK 413).